Reading from the N-terminus, the 128-residue chain is Large ribosomal subunit protein bL17 (128 aa).

This sequence belongs to the bacterial ribosomal protein bL17 family. Part of the 50S ribosomal subunit. Contacts protein L32.

The sequence is that of Large ribosomal subunit protein bL17 from Streptococcus sanguinis (strain SK36).